The following is a 155-amino-acid chain: uncharacterized protein (155 aa).

The tract at residues 135 to 155 (SQANSKNDSNSKDDLPNPFSV) is disordered.

This is an uncharacterized protein from Acidianus convivator (ATV).